The chain runs to 264 residues: Thymidylate synthase (264 aa).

Arginine 21 is a binding site for dUMP. Histidine 51 contacts (6R)-5,10-methylene-5,6,7,8-tetrahydrofolate. 126 to 127 is a binding site for dUMP; sequence RR. Cysteine 146 (nucleophile) is an active-site residue. DUMP is bound by residues 166 to 169, asparagine 177, and 207 to 209; these read RSCD and HLY. Position 169 (aspartate 169) interacts with (6R)-5,10-methylene-5,6,7,8-tetrahydrofolate. Alanine 263 lines the (6R)-5,10-methylene-5,6,7,8-tetrahydrofolate pocket.

The protein belongs to the thymidylate synthase family. Bacterial-type ThyA subfamily. Homodimer.

The protein localises to the cytoplasm. The enzyme catalyses dUMP + (6R)-5,10-methylene-5,6,7,8-tetrahydrofolate = 7,8-dihydrofolate + dTMP. It participates in pyrimidine metabolism; dTTP biosynthesis. Functionally, catalyzes the reductive methylation of 2'-deoxyuridine-5'-monophosphate (dUMP) to 2'-deoxythymidine-5'-monophosphate (dTMP) while utilizing 5,10-methylenetetrahydrofolate (mTHF) as the methyl donor and reductant in the reaction, yielding dihydrofolate (DHF) as a by-product. This enzymatic reaction provides an intracellular de novo source of dTMP, an essential precursor for DNA biosynthesis. The chain is Thymidylate synthase from Buchnera aphidicola subsp. Baizongia pistaciae (strain Bp).